Reading from the N-terminus, the 323-residue chain is Methionyl-tRNA formyltransferase (323 aa).

115–118 (SLLP) lines the (6S)-5,6,7,8-tetrahydrofolate pocket.

The protein belongs to the Fmt family.

It catalyses the reaction L-methionyl-tRNA(fMet) + (6R)-10-formyltetrahydrofolate = N-formyl-L-methionyl-tRNA(fMet) + (6S)-5,6,7,8-tetrahydrofolate + H(+). Functionally, attaches a formyl group to the free amino group of methionyl-tRNA(fMet). The formyl group appears to play a dual role in the initiator identity of N-formylmethionyl-tRNA by promoting its recognition by IF2 and preventing the misappropriation of this tRNA by the elongation apparatus. The chain is Methionyl-tRNA formyltransferase from Blochmanniella floridana.